A 549-amino-acid polypeptide reads, in one-letter code: Lipase 4 (549 aa).

The N-terminal stretch at 1 to 15 (MKLALVLSLIVSVAA) is a signal peptide. Cys75 and Cys112 are joined by a disulfide. The Acyl-ester intermediate role is filled by Ser224. A disulfide bridge links Cys283 with Cys292. The Charge relay system role is filled by Glu356. An N-linked (GlcNAc...) asparagine glycan is attached at Asn366. Catalysis depends on His464, which acts as the Charge relay system.

This sequence belongs to the type-B carboxylesterase/lipase family.

It carries out the reaction a triacylglycerol + H2O = a diacylglycerol + a fatty acid + H(+). This is Lipase 4 (LIP4) from Diutina rugosa (Yeast).